The chain runs to 140 residues: Large ribosomal subunit protein uL11 (140 aa).

This sequence belongs to the universal ribosomal protein uL11 family. Part of the ribosomal stalk of the 50S ribosomal subunit. Interacts with L10 and the large rRNA to form the base of the stalk. L10 forms an elongated spine to which L12 dimers bind in a sequential fashion forming a multimeric L10(L12)X complex. In terms of processing, one or more lysine residues are methylated.

In terms of biological role, forms part of the ribosomal stalk which helps the ribosome interact with GTP-bound translation factors. In Lawsonia intracellularis (strain PHE/MN1-00), this protein is Large ribosomal subunit protein uL11.